The following is a 401-amino-acid chain: Phosphoglycerate kinase (401 aa).

Residues 20–22 (DFN), arginine 35, 58–61 (HLGR), arginine 117, and arginine 154 contribute to the substrate site. ATP contacts are provided by residues lysine 204, glycine 298, glutamate 329, and 358–361 (GGDS).

The protein belongs to the phosphoglycerate kinase family. In terms of assembly, monomer.

Its subcellular location is the cytoplasm. The catalysed reaction is (2R)-3-phosphoglycerate + ATP = (2R)-3-phospho-glyceroyl phosphate + ADP. Its pathway is carbohydrate degradation; glycolysis; pyruvate from D-glyceraldehyde 3-phosphate: step 2/5. The chain is Phosphoglycerate kinase from Bifidobacterium longum (strain NCC 2705).